Reading from the N-terminus, the 409-residue chain is Tryptophan synthase beta chain (409 aa).

Lys-98 carries the post-translational modification N6-(pyridoxal phosphate)lysine.

This sequence belongs to the TrpB family. As to quaternary structure, tetramer of two alpha and two beta chains. Pyridoxal 5'-phosphate is required as a cofactor.

It catalyses the reaction (1S,2R)-1-C-(indol-3-yl)glycerol 3-phosphate + L-serine = D-glyceraldehyde 3-phosphate + L-tryptophan + H2O. Its pathway is amino-acid biosynthesis; L-tryptophan biosynthesis; L-tryptophan from chorismate: step 5/5. In terms of biological role, the beta subunit is responsible for the synthesis of L-tryptophan from indole and L-serine. The chain is Tryptophan synthase beta chain from Jannaschia sp. (strain CCS1).